The sequence spans 513 residues: Cytochrome P450 monooxygenase eqxH (513 aa).

Residues 13-32 (QYAILCGITVFTLFIVQLSL) traverse the membrane as a helical segment. 2 N-linked (GlcNAc...) asparagine glycosylation sites follow: N130 and N295. C449 serves as a coordination point for heme.

The protein belongs to the cytochrome P450 family. Heme serves as cofactor.

It is found in the membrane. The protein operates within mycotoxin biosynthesis. In terms of biological role, cytochrome P450 monooxygenase; part of the gene cluster that mediates the biosynthesis of equisetin, a trans-fused decalin-containing tetramic acid with antimicrobial activity. The PKS module of eqxS together with the enoylreductase eqxC catalyze the formation of the polyketide unit which is then conjugated to L-serine by the condensation domain of the eqxS NRPS module. Activity of the Dieckmann cyclase domain (RED) results in release of the Dieckmann product intermediate. Diels-Alderase eqx3 is involved in endo-selective Diels-Alder cycloaddition to form the decalin ring, leading to the production of N-desmethylequisetin also called trichosetin. Subsequent N-methylation is carried out by eqxD to give equisetin. The polypeptide is Cytochrome P450 monooxygenase eqxH (Fusarium heterosporum).